A 42-amino-acid polypeptide reads, in one-letter code: uncharacterized protein (42 aa).

The segment at 1–42 is disordered; the sequence is MTTGKPQSFEKMRTPFPGRSKAKGPQSDIIPSAPPNTPVTEH. Over residues 32-42 the composition is skewed to pro residues; it reads SAPPNTPVTEH.

This is an uncharacterized protein from Schizosaccharomyces pombe (strain 972 / ATCC 24843) (Fission yeast).